A 505-amino-acid chain; its full sequence is Maturase K (505 aa).

It belongs to the intron maturase 2 family. MatK subfamily.

It localises to the plastid. The protein localises to the chloroplast. In terms of biological role, usually encoded in the trnK tRNA gene intron. Probably assists in splicing its own and other chloroplast group II introns. This is Maturase K from Nuphar variegata (Yellow pond lily).